The primary structure comprises 114 residues: DNA-directed RNA polymerase subunit omega (114 aa).

The protein belongs to the RNA polymerase subunit omega family. In terms of assembly, the RNAP catalytic core consists of 2 alpha, 1 beta, 1 beta' and 1 omega subunit. When a sigma factor is associated with the core the holoenzyme is formed, which can initiate transcription.

The enzyme catalyses RNA(n) + a ribonucleoside 5'-triphosphate = RNA(n+1) + diphosphate. In terms of biological role, promotes RNA polymerase assembly. Latches the N- and C-terminal regions of the beta' subunit thereby facilitating its interaction with the beta and alpha subunits. In Erythrobacter litoralis (strain HTCC2594), this protein is DNA-directed RNA polymerase subunit omega.